The chain runs to 320 residues: MSPVLPRHDIEFPTLDGITLRGWLYPATKRGPGMILSPGFNMPKDAIIPDICKWFQERDITCLAWDPRGIGASDGEPRNDIDPRQEAEHLHDAVTWLSKNPLVDVTKIALWGLCFGGNVTLAAAALEYVLNGSPFSSPPCFVVPSWADIDLTLSKRIAAMISVAPLIDSTGLPERRQPILELAMYDRAGRLEGDDPMYLPYVNEDGSVPNGLQLAADMMPALDRLGIPVENRVTVQTYYRALTWSVLNLVEYIAPTPAMMVTPEFDVSCPTKDQLKAYERMGEPKELDILKGKGHLDWIFGDVDIILNRQLDFLKRQMNF.

Residues 58-298 (RDITCLAWDP…ILKGKGHLDW (241 aa)) are abhydrolase domain.

It belongs to the polyketide transferase af380 family.

Polyketide transferase; part of the gene cluster that mediates the biosynthesis of fujikurins A-D, secondary metabolites playing a role during rice infection. The polyketide synthase PKS19 acts with the trans-enoyl reductase FFUJ_12240 and the polyketide transferase FFUJ_12241 to produce fujikurins, however, the biosynthesis pathway has not been identified yet. This Gibberella fujikuroi (strain CBS 195.34 / IMI 58289 / NRRL A-6831) (Bakanae and foot rot disease fungus) protein is Polyketide transferase FFUJ_12241.